A 331-amino-acid polypeptide reads, in one-letter code: Protein FLX-like 1 (331 aa).

The segment at 1-51 (MSGRNRGPPPPSMKGGSYSGLQAPVHQPPFVRGLGGGPVPPPPHPSMIDDS) is disordered. A coiled-coil region spans residues 69–252 (ILEDRLAAQN…AEIANSETSA (184 aa)). The segment covering 306-321 (QAAWAGGYDPQQQQQQ) has biased composition (low complexity). Residues 306-331 (QAAWAGGYDPQQQQQQQPPPQGQGHR) are disordered. The segment covering 322-331 (QPPPQGQGHR) has biased composition (pro residues).

Belongs to the FLX family. In terms of assembly, interacts with FRI.

In terms of biological role, has no transcriptional activation activity. This is Protein FLX-like 1 (FLXL1) from Arabidopsis thaliana (Mouse-ear cress).